Consider the following 137-residue polypeptide: Cellular retinoic acid-binding protein 1 (137 aa).

The Nuclear localization signal signature appears at 21–31 (KALGVNAMLRK). All-trans-retinoate is bound at residue 132–134 (RIY).

Belongs to the calycin superfamily. Fatty-acid binding protein (FABP) family.

The protein resides in the cytoplasm. In terms of biological role, cytosolic CRABPs may regulate the access of retinoic acid to the nuclear retinoic acid receptors. The chain is Cellular retinoic acid-binding protein 1 (Crabp1) from Mus musculus (Mouse).